The primary structure comprises 841 residues: DNA ligase (841 aa).

NAD(+)-binding positions include 54–58, 103–104, and E143; these read DAEYD and SL. Residue K145 is the N6-AMP-lysine intermediate of the active site. Residues R166, E203, K321, and K345 each contribute to the NAD(+) site. C471, C474, C489, and C495 together coordinate Zn(2+). Residues 554-575 are disordered; it reads KTVAESDQMPSEGSSVGASGKH. Over residues 561 to 570 the composition is skewed to polar residues; that stretch reads QMPSEGSSVG. Residues 764 to 841 form the BRCT domain; sequence GINKAVAGKT…SEAELLTLLG (78 aa).

Belongs to the NAD-dependent DNA ligase family. LigA subfamily. Requires Mg(2+) as cofactor. Mn(2+) serves as cofactor.

It catalyses the reaction NAD(+) + (deoxyribonucleotide)n-3'-hydroxyl + 5'-phospho-(deoxyribonucleotide)m = (deoxyribonucleotide)n+m + AMP + beta-nicotinamide D-nucleotide.. Its function is as follows. DNA ligase that catalyzes the formation of phosphodiester linkages between 5'-phosphoryl and 3'-hydroxyl groups in double-stranded DNA using NAD as a coenzyme and as the energy source for the reaction. It is essential for DNA replication and repair of damaged DNA. The sequence is that of DNA ligase from Neisseria meningitidis serogroup C (strain 053442).